Consider the following 106-residue polypeptide: Glutaredoxin-1 (106 aa).

A2 is subject to N-acetylalanine. The 104-residue stretch at 3–106 (QEFVNCKIQP…TRLKQIGALQ (104 aa)) folds into the Glutaredoxin domain. At K9 the chain carries N6-succinyllysine. 2 disulfides stabilise this stretch: C23-C26 and C79-C83.

It belongs to the glutaredoxin family.

The protein resides in the cytoplasm. Its function is as follows. Has a glutathione-disulfide oxidoreductase activity in the presence of NADPH and glutathione reductase. Reduces low molecular weight disulfides and proteins. In Homo sapiens (Human), this protein is Glutaredoxin-1 (GLRX).